The chain runs to 302 residues: Protein TILLER ANGLE CONTROL 1 (302 aa).

Residues 57–63 (GILTIGT) carry the IGT motif motif. 2 disordered regions span residues 82–115 (ESEE…VEDE) and 159–180 (EGSS…KNKK). The segment covering 99 to 115 (DDDDDDDEHYDHSVEDE) has biased composition (acidic residues). Residues 162-175 (SEISTKPDQSANDQ) show a composition bias toward polar residues.

The protein belongs to the TAC family. As to expression, highly expressed in flower buds. Expressed in branch attachment sites, vegetative buds and young fruits.

In terms of biological role, involved in the regulation of axillary shoot growth angle. Promotes horizontal shoot growth. This chain is Protein TILLER ANGLE CONTROL 1, found in Prunus persica (Peach).